A 182-amino-acid polypeptide reads, in one-letter code: Large ribosomal subunit protein uL5 (182 aa).

It belongs to the universal ribosomal protein uL5 family. As to quaternary structure, part of the 50S ribosomal subunit; part of the 5S rRNA/L5/L18/L25 subcomplex. Contacts the 5S rRNA and the P site tRNA. Forms a bridge to the 30S subunit in the 70S ribosome.

Its function is as follows. This is one of the proteins that bind and probably mediate the attachment of the 5S RNA into the large ribosomal subunit, where it forms part of the central protuberance. In the 70S ribosome it contacts protein S13 of the 30S subunit (bridge B1b), connecting the 2 subunits; this bridge is implicated in subunit movement. Contacts the P site tRNA; the 5S rRNA and some of its associated proteins might help stabilize positioning of ribosome-bound tRNAs. The polypeptide is Large ribosomal subunit protein uL5 (Coxiella burnetii (strain CbuG_Q212) (Coxiella burnetii (strain Q212))).